The primary structure comprises 363 residues: MNGSPTPKRYSSKSSRLYDDYYNIPYQYSNPTPMNRDYNDVGSRINADKLVPEEYKRNTEFINKAVQQNKELNFKLREKQNEIFELKKIAETLRSKLEKYVDITKKLEDQNLNLQIKISDLEKKLSDANSTFKEMRFPKVKDPMVDDDPVSENYDQINVPKHRAPDATGNPRTTNKVSNTSDQDSRLKAIERTLSVLTNYVMRSEDGNNDRMSPLPSPLNTISPINNRLNFQEPKRYNPTVKVNPSDDDIMMYESAELKRVEEEIEELKRKILVRKKHDLRKLSLNNQLQELQSMMDGDDNIKLDNVSKHNHATHRHSSQSSRDYSPSSDACLECSNDLYEKNRVKPENNMSETFATPTPNNR.

Residues 62-136 are a coiled coil; sequence INKAVQQNKE…DANSTFKEMR (75 aa). Positions 160-184 are disordered; it reads PKHRAPDATGNPRTTNKVSNTSDQD. Residues 170-182 show a composition bias toward polar residues; that stretch reads NPRTTNKVSNTSD. A phosphoserine mark is found at Ser-213, Ser-217, Ser-284, and Ser-329. A coiled-coil region spans residues 248–297; the sequence is DDIMMYESAELKRVEEEIEELKRKILVRKKHDLRKLSLNNQLQELQSMMD. The tract at residues 310–363 is disordered; that stretch reads HNHATHRHSSQSSRDYSPSSDACLECSNDLYEKNRVKPENNMSETFATPTPNNR. Positions 319–329 are enriched in low complexity; sequence SQSSRDYSPSS. The span at 349–363 shows a compositional bias: polar residues; that stretch reads NNMSETFATPTPNNR.

This sequence belongs to the SPC42 family. Component of the SPC110 complex containing at least CMD1, SPC29, SPC42 and SCP110.

The protein localises to the nucleus. It is found in the cytoplasm. Its subcellular location is the cytoskeleton. It localises to the microtubule organizing center. The protein resides in the spindle pole body. Forms a polymeric layer at the periphery of the spindle pole body (SPB) central plaque which has an essential function during SPB duplication and may facilitate attachment of the SPB to the nuclear membrane. This Saccharomyces cerevisiae (strain RM11-1a) (Baker's yeast) protein is Spindle pole body component SPC42 (SPC42).